Here is a 432-residue protein sequence, read N- to C-terminus: Adenylosuccinate synthetase (432 aa).

Residues 13–19 (GDEGKGK) and 41–43 (GHT) contribute to the GTP site. Asp14 acts as the Proton acceptor in catalysis. Mg(2+) is bound by residues Asp14 and Gly41. IMP-binding positions include 14–17 (DEGK), 39–42 (NAGH), Thr130, Arg144, Gln225, Thr240, and Arg304. Catalysis depends on His42, which acts as the Proton donor. A substrate-binding site is contributed by 300-306 (ATTGRRR). GTP contacts are provided by residues Arg306, 332 to 334 (KLD), and 415 to 417 (STG).

Belongs to the adenylosuccinate synthetase family. Homodimer. The cofactor is Mg(2+).

The protein localises to the cytoplasm. It carries out the reaction IMP + L-aspartate + GTP = N(6)-(1,2-dicarboxyethyl)-AMP + GDP + phosphate + 2 H(+). The protein operates within purine metabolism; AMP biosynthesis via de novo pathway; AMP from IMP: step 1/2. Plays an important role in the de novo pathway of purine nucleotide biosynthesis. Catalyzes the first committed step in the biosynthesis of AMP from IMP. The polypeptide is Adenylosuccinate synthetase (Edwardsiella ictaluri (strain 93-146)).